The following is a 271-amino-acid chain: Aliphatic sulfonates import ATP-binding protein SsuB (271 aa).

In terms of domain architecture, ABC transporter spans Ile13 to Leu234. Residue Gly45 to Ser52 coordinates ATP. Residues Glu250–Asn271 form a disordered region. Residues Arg260–Asn271 are compositionally biased toward polar residues.

Belongs to the ABC transporter superfamily. Aliphatic sulfonates importer (TC 3.A.1.17.2) family. The complex is composed of two ATP-binding proteins (SsuB), two transmembrane proteins (SsuC) and a solute-binding protein (SsuA).

The protein resides in the cell inner membrane. The catalysed reaction is ATP + H2O + aliphatic sulfonate-[sulfonate-binding protein]Side 1 = ADP + phosphate + aliphatic sulfonateSide 2 + [sulfonate-binding protein]Side 1.. In terms of biological role, part of the ABC transporter complex SsuABC involved in aliphatic sulfonates import. Responsible for energy coupling to the transport system. This chain is Aliphatic sulfonates import ATP-binding protein SsuB, found in Yersinia pestis bv. Antiqua (strain Antiqua).